The primary structure comprises 1220 residues: DNA-directed RNA polymerase subunit beta' (1220 aa).

Residues Cys61, Cys63, Cys76, and Cys79 each contribute to the Zn(2+) site. 3 residues coordinate Mg(2+): Asp450, Asp452, and Asp454. A disordered region spans residues 1197–1220; sequence QPESESEEASDIPKLDDVAKTFDN. Over residues 1207-1220 the composition is skewed to basic and acidic residues; that stretch reads DIPKLDDVAKTFDN.

Belongs to the RNA polymerase beta' chain family. As to quaternary structure, the RNAP catalytic core consists of 2 alpha, 1 beta, 1 beta' and 1 omega subunit. When a sigma factor is associated with the core the holoenzyme is formed, which can initiate transcription. The cofactor is Mg(2+). Zn(2+) serves as cofactor.

The enzyme catalyses RNA(n) + a ribonucleoside 5'-triphosphate = RNA(n+1) + diphosphate. In terms of biological role, DNA-dependent RNA polymerase catalyzes the transcription of DNA into RNA using the four ribonucleoside triphosphates as substrates. The chain is DNA-directed RNA polymerase subunit beta' from Leuconostoc mesenteroides subsp. mesenteroides (strain ATCC 8293 / DSM 20343 / BCRC 11652 / CCM 1803 / JCM 6124 / NCDO 523 / NBRC 100496 / NCIMB 8023 / NCTC 12954 / NRRL B-1118 / 37Y).